A 1736-amino-acid chain; its full sequence is Hybrid signal transduction histidine kinase I (1736 aa).

Low complexity predominate over residues 143–161 (HNINNNQNNQNSVNINSSN). A disordered region spans residues 143–171 (HNINNNQNNQNSVNINSSNKGQYNRPEPS). A PAC domain is found at 234 to 286 (FEYPLRINRKNDNLVRYIQLKGEIIKKDDKVFKVLGVCHDFSEIQEAKDKLEE). The 72-residue stretch at 287-358 (ESKFVEALIG…QINLEKSGTP (72 aa)) folds into the PAS domain. Positions 378–469 (TSNQQQSSLS…NTTNGIGGAT (92 aa)) are disordered. The span at 379 to 389 (SNQQQSSLSKS) shows a compositional bias: low complexity. The segment covering 392–412 (PRSQSNCSNGNKSQNRLSKNY) has biased composition (polar residues). Residues 413 to 469 (STTTTTTNNNNNNNNNNNNNNNNNNNNNSISQQQQTQVSTQQTQQQQNTTNGIGGAT) are compositionally biased toward low complexity. One can recognise a Histidine kinase domain in the interval 556-908 (NISHELLSPM…TFHFILSIKS (353 aa)). Histidine 559 is subject to Phosphohistidine; by autocatalysis. Disordered stretches follow at residues 711–821 (NSKT…KREK), 952–971 (TKKV…TNYG), 1080–1124 (NGNN…KQHS), 1157–1258 (PPKS…ILSP), 1277–1301 (SLTP…INNG), 1330–1393 (ASSP…NLSS), and 1419–1520 (SNNL…PPIL). Composition is skewed to acidic residues over residues 725–735 (SIDGDYDDQDN) and 758–789 (ELDE…DDDT). 3 stretches are compositionally biased toward low complexity: residues 790–807 (SSNT…FHNN), 961–971 (DNGNNDSTNYG), and 1080–1096 (NGNN…NNNI). The segment covering 1097–1117 (QTPNGLNNSRGSSLISTPSTK) has biased composition (polar residues). 2 stretches are compositionally biased toward low complexity: residues 1186–1195 (SSPPINSSSS) and 1202–1258 (TNGS…ILSP). The span at 1330 to 1339 (ASSPKQSQRG) shows a compositional bias: polar residues. Composition is skewed to low complexity over residues 1340–1376 (YSPK…QQQQ), 1425–1475 (NNNN…STPE), 1482–1492 (SPRSNNNNNCS), and 1506–1520 (SSTI…PPIL). The Response regulatory domain maps to 1551-1674 (KVLVAEDNTM…LLYEVINTQI (124 aa)). Residue aspartate 1605 is modified to 4-aspartylphosphate. Residues 1695 to 1722 (NNNNNNTNNNNNNNNSSNPVNNNNSNSI) are compositionally biased toward low complexity. Residues 1695-1736 (NNNNNNTNNNNNNNNSSNPVNNNNSNSIDATQQELNNEKIRI) form a disordered region.

Activation probably requires transfer of a phosphate group between a histidine in the kinase core (transmitter) domain and an aspartate of the receiver domain.

It carries out the reaction ATP + protein L-histidine = ADP + protein N-phospho-L-histidine.. In terms of biological role, acts as a receptor histidine kinase for a signal transduction pathway. This protein undergoes an ATP-dependent autophosphorylation at a conserved histidine residue in the kinase core, and a phosphoryl group is then transferred to a conserved aspartate residue in the receiver domain. In Dictyostelium discoideum (Social amoeba), this protein is Hybrid signal transduction histidine kinase I (dhkI-1).